The primary structure comprises 347 residues: MRIEEDLKLGFKDVLIRPKRSTLKSRSDVELERQFTFKHSGQSWSGVPIIAANMDTVGTFSMASALASFDILTAVHKHYSVEEWQAFINNSSADVLKHVMVSTGTSDADFEKTKQILDLNPALNFVCIDVANGYSEHFVQFVAKAREAWPTKTICAGNVVTGEMCEELILSGADIVKVGIGPGSVCTTRVKTGVGYPQLSAVIECADAAHGLGGMIISDGGCTTPGDVAKAFGGGADFVMLGGMLAGHEESGGRIVEENGEKFMLFYGMSSESAMKRHVGGVAEYRAAEGKTVKLPLRGPVENTARDILGGLRSACTYVGASRLKELTKRTTFIRVQEQENRIFNNL.

NADP(+) is bound at residue 108-131; the sequence is ADFEKTKQILDLNPALNFVCIDVA. Residues Gly-181 and Gly-183 each coordinate K(+). Cys-186 functions as the Thioimidate intermediate in the catalytic mechanism. 216-239 serves as a coordination point for NADP(+); the sequence is IISDGGCTTPGDVAKAFGGGADFV.

It belongs to the IMPDH/GMPR family. GuaC type 1 subfamily. Homotetramer.

The enzyme catalyses IMP + NH4(+) + NADP(+) = GMP + NADPH + 2 H(+). Its function is as follows. Catalyzes the irreversible NADPH-dependent deamination of GMP to IMP. It functions in the conversion of nucleobase, nucleoside and nucleotide derivatives of G to A nucleotides, and in maintaining the intracellular balance of A and G nucleotides. In Escherichia coli O157:H7, this protein is GMP reductase.